Reading from the N-terminus, the 235-residue chain is 2,3,4,5-tetrahydropyridine-2,6-dicarboxylate N-acetyltransferase (235 aa).

The protein belongs to the transferase hexapeptide repeat family. DapH subfamily.

The catalysed reaction is (S)-2,3,4,5-tetrahydrodipicolinate + acetyl-CoA + H2O = L-2-acetamido-6-oxoheptanedioate + CoA. It functions in the pathway amino-acid biosynthesis; L-lysine biosynthesis via DAP pathway; LL-2,6-diaminopimelate from (S)-tetrahydrodipicolinate (acetylase route): step 1/3. Catalyzes the transfer of an acetyl group from acetyl-CoA to tetrahydrodipicolinate. This is 2,3,4,5-tetrahydropyridine-2,6-dicarboxylate N-acetyltransferase from Exiguobacterium sibiricum (strain DSM 17290 / CCUG 55495 / CIP 109462 / JCM 13490 / 255-15).